The sequence spans 215 residues: Ectodysplasin-A receptor-associated adapter protein (215 aa).

Disordered regions lie at residues Met1–Ser41 and Leu62–Pro86. Basic and acidic residues predominate over residues Gly17–Val28. The 80-residue stretch at Asp123–Glu202 folds into the Death domain.

As to quaternary structure, self-associates and binds EDAR, TRAF1, TRAF2 and TRAF3. As to expression, detected in adult pancreas, placenta and fetal skin, and at lower levels in lung, thymus, prostate and testis.

The protein resides in the cytoplasm. Functionally, adapter protein that interacts with EDAR DEATH domain and couples the receptor to EDA signaling pathway during morphogenesis of ectodermal organs. Mediates the activation of NF-kappa-B. The chain is Ectodysplasin-A receptor-associated adapter protein (EDARADD) from Homo sapiens (Human).